The chain runs to 254 residues: (2Z,6E)-farnesyl diphosphate synthase (254 aa).

The active site involves Asp34. Asp34 contributes to the Mg(2+) binding site. Residues 35–38 (GNRR), Trp39, His52, and 80–82 (STD) contribute to the substrate site. Asn83 serves as the catalytic Proton acceptor. Substrate contacts are provided by residues Arg86, Arg203, and 209-211 (RLS). Glu222 is a Mg(2+) binding site.

It belongs to the UPP synthase family. Z-FPP synthase subfamily. As to quaternary structure, homodimer. Requires Mg(2+) as cofactor.

The catalysed reaction is isopentenyl diphosphate + (2E)-geranyl diphosphate = (2Z,6E)-farnesyl diphosphate + diphosphate. Functionally, catalyzes the condensation of only one isopentenyl pyrophosphate (IPP) unit in the cis configuration to E-geranyl diphosphate (E-GPP) generating the 15 carbon product (2Z,6E)-farnesyl diphosphate (Z-FPP or EZ-FPP). Only geranyl diphosphate (GPP) can be used as isoprenyl acceptor. This Thermobifida fusca (strain YX) protein is (2Z,6E)-farnesyl diphosphate synthase.